We begin with the raw amino-acid sequence, 338 residues long: Ketol-acid reductoisomerase (NADP(+)) (338 aa).

Positions 1-181 (MKVFYDKDAD…GGGRAGIIET (181 aa)) constitute a KARI N-terminal Rossmann domain. NADP(+) contacts are provided by residues 24–27 (YGSQ), arginine 47, and serine 52. Histidine 107 is an active-site residue. Glycine 133 contributes to the NADP(+) binding site. A KARI C-terminal knotted domain is found at 182–327 (NFREETETDL…SKLRAMMPWI (146 aa)). Mg(2+)-binding residues include aspartate 190, glutamate 194, glutamate 226, and glutamate 230. Serine 251 contributes to the substrate binding site.

The protein belongs to the ketol-acid reductoisomerase family. Mg(2+) is required as a cofactor.

It carries out the reaction (2R)-2,3-dihydroxy-3-methylbutanoate + NADP(+) = (2S)-2-acetolactate + NADPH + H(+). The catalysed reaction is (2R,3R)-2,3-dihydroxy-3-methylpentanoate + NADP(+) = (S)-2-ethyl-2-hydroxy-3-oxobutanoate + NADPH + H(+). The protein operates within amino-acid biosynthesis; L-isoleucine biosynthesis; L-isoleucine from 2-oxobutanoate: step 2/4. It participates in amino-acid biosynthesis; L-valine biosynthesis; L-valine from pyruvate: step 2/4. Involved in the biosynthesis of branched-chain amino acids (BCAA). Catalyzes an alkyl-migration followed by a ketol-acid reduction of (S)-2-acetolactate (S2AL) to yield (R)-2,3-dihydroxy-isovalerate. In the isomerase reaction, S2AL is rearranged via a Mg-dependent methyl migration to produce 3-hydroxy-3-methyl-2-ketobutyrate (HMKB). In the reductase reaction, this 2-ketoacid undergoes a metal-dependent reduction by NADPH to yield (R)-2,3-dihydroxy-isovalerate. This chain is Ketol-acid reductoisomerase (NADP(+)), found in Burkholderia mallei (strain NCTC 10229).